The sequence spans 145 residues: Venom protein 30.1 (145 aa).

A signal peptide spans Met1–Thr18.

Post-translationally, contains 5 disulfide bonds. Expressed by the venom gland.

The protein localises to the secreted. This is Venom protein 30.1 from Lychas mucronatus (Chinese swimming scorpion).